Here is a 1945-residue protein sequence, read N- to C-terminus: Rho GTPase-activating protein 21 (1945 aa).

Residues 26-53 (CEVSKNKDGKDQGEPVSPSEDEPFSWPG) are disordered. Positions 29–38 (SKNKDGKDQG) are enriched in basic and acidic residues. 2 positions are modified to phosphoserine: Ser-42 and Ser-63. Residues 56–165 (TVMLKRTSQG…TLELSVMPKD (110 aa)) enclose the PDZ domain. Disordered stretches follow at residues 210–229 (TAQPVETCPPDSLPNKQQTS) and 326–365 (HQTTGSRSLEPSGILLKSGNYSGHSEGISSSRSQAVDSPP). The span at 347 to 358 (SGHSEGISSSRS) shows a compositional bias: low complexity. Ser-454 is modified (phosphoserine). The segment covering 499–512 (EATATVNSESQIPD) has biased composition (polar residues). The interval 499–519 (EATATVNSESQIPDSNGERKQ) is disordered. An omega-N-methylarginine mark is found at Arg-549 and Arg-569. Disordered stretches follow at residues 573-647 (PVSQ…RPVN) and 674-702 (EVSSCLPGTSAKTSPQLSENLGTSDLELP). The segment covering 589-600 (SNRNFPTTTGVS) has biased composition (polar residues). Residues Ser-610 and Ser-619 each carry the phosphoserine modification. Residues 674 to 696 (EVSSCLPGTSAKTSPQLSENLGT) are compositionally biased toward polar residues. Thr-741 bears the Phosphothreonine mark. 3 positions are modified to phosphoserine: Ser-851, Ser-856, and Ser-875. 2 disordered regions span residues 852 to 879 (HDQESVGPPSLDGQHSSKTERSKSYDEG) and 902 to 921 (ITDSQKSSEDSGSRKGSSSE). The segment covering 866–879 (HSSKTERSKSYDEG) has biased composition (basic and acidic residues). Tyr-876 carries the post-translational modification Phosphotyrosine. 5 positions are modified to phosphoserine: Ser-918, Ser-920, Ser-948, Ser-1093, and Ser-1109. The tract at residues 924–1091 (SDAAREGWLQ…AKSEPKTQSP (168 aa)) is interaction with ARF1 and ARF6. A PH domain is found at 925-1034 (DAAREGWLQF…WIKTIQESSN (110 aa)). Residues 1080–1120 (LGAKSEPKTQSPHSPKEESERKLLSKDDTSPPKDKGTWRRG) form a disordered region. Positions 1093 to 1116 (SPKEESERKLLSKDDTSPPKDKGT) are enriched in basic and acidic residues. Residues 1141–1333 (VRLDDCPPAH…TLIQHHDWFF (193 aa)) form the Rho-GAP domain. 4 disordered regions span residues 1373 to 1396 (PGDVSDSATSDSAKSKGSWGSGKD), 1412 to 1632 (SRKR…PVFP), 1649 to 1794 (ARVS…LGGH), and 1846 to 1945 (RTSA…ETPP). The span at 1377–1395 (SDSATSDSAKSKGSWGSGK) shows a compositional bias: low complexity. Phosphoserine occurs at positions 1412, 1426, and 1427. 2 stretches are compositionally biased toward basic and acidic residues: residues 1435 to 1457 (FFKKENTEQSHSEIKEESKRESE) and 1471 to 1488 (SNTKKDSGTTKEEKKIPW). Residue Lys-1438 forms a Glycyl lysine isopeptide (Lys-Gly) (interchain with G-Cter in SUMO) linkage. Thr-1504 carries the phosphothreonine modification. Composition is skewed to low complexity over residues 1531–1556 (SDSGTLLSTSSQASLLRSSTKKSTSP) and 1569–1589 (TTTSDYSTTSSTTYLTSLDSS). Residues 1579 to 1848 (STTYLTSLDS…WLARERVRTS (270 aa)) form an interaction with CTNNA1 region. The segment covering 1590–1599 (RLSPEVQSVA) has biased composition (polar residues). Residues 1611–1621 (SELVSEGRPVE) are compositionally biased toward basic and acidic residues. At Ser-1656 the chain carries Phosphoserine. 2 stretches are compositionally biased toward polar residues: residues 1658 to 1681 (GSEASCTEGSLTPSLDSRRQQFSS) and 1729 to 1738 (STGSLLTPSR). Position 1669 is a phosphothreonine (Thr-1669). At Ser-1729 the chain carries Phosphoserine. The span at 1739–1757 (SESEKQEATWKTKIADRLK) shows a compositional bias: basic and acidic residues. Basic residues predominate over residues 1782-1792 (RKNIKRRHTLG). Residues 1871–1882 (PISTHSPPSQQP) show a composition bias toward polar residues. Residues 1887 to 1896 (AATSTLASTS) are compositionally biased toward low complexity. Thr-1902 is subject to Phosphothreonine. Ser-1906 bears the Phosphoserine mark. The segment covering 1907–1927 (PDQINRESFQNMSQNASSTAN) has biased composition (polar residues). Positions 1932-1945 (KQSESPDTKAETPP) are enriched in basic and acidic residues.

In terms of assembly, interacts with CTNNA1. Interacts with GTP-bound ARF1 and probably ARF6. In terms of processing, sumoylated with SUMO2 and SUMO3 in proliferating lymphocytes.

The protein resides in the golgi apparatus membrane. It is found in the cell junction. The protein localises to the cytoplasmic vesicle membrane. It localises to the cytoplasm. Its subcellular location is the cytoskeleton. In terms of biological role, functions as a GTPase-activating protein (GAP) for RHOA and CDC42. Downstream partner of ARF1 which may control Golgi apparatus structure and function. Also required for CTNNA1 recruitment to adherens junctions. In Mus musculus (Mouse), this protein is Rho GTPase-activating protein 21.